The following is a 186-amino-acid chain: Peptide deformylase (186 aa).

Fe cation contacts are provided by Cys94 and His136. The active site involves Glu137. His140 lines the Fe cation pocket.

It belongs to the polypeptide deformylase family. Requires Fe(2+) as cofactor.

The catalysed reaction is N-terminal N-formyl-L-methionyl-[peptide] + H2O = N-terminal L-methionyl-[peptide] + formate. Functionally, removes the formyl group from the N-terminal Met of newly synthesized proteins. Requires at least a dipeptide for an efficient rate of reaction. N-terminal L-methionine is a prerequisite for activity but the enzyme has broad specificity at other positions. The protein is Peptide deformylase of Prosthecochloris aestuarii (strain DSM 271 / SK 413).